We begin with the raw amino-acid sequence, 362 residues long: Inactive 2'-5' oligoadenylate synthetase 1C (362 aa).

Belongs to the 2-5A synthase family. Expressed at highest level in brain with lesser amounts in spleen, kidney, stomach, liver, intestine, ovary, skin and testis. Not detected in lung, thymus, heart and uterus.

In terms of biological role, does not have 2'-5'-OAS activity, but can bind double-stranded RNA. This is Inactive 2'-5' oligoadenylate synthetase 1C from Mus musculus (Mouse).